A 156-amino-acid polypeptide reads, in one-letter code: Endoribonuclease YbeY (156 aa).

Zn(2+) contacts are provided by histidine 117, histidine 121, and histidine 127.

It belongs to the endoribonuclease YbeY family. The cofactor is Zn(2+).

It localises to the cytoplasm. Functionally, single strand-specific metallo-endoribonuclease involved in late-stage 70S ribosome quality control and in maturation of the 3' terminus of the 16S rRNA. In Shewanella pealeana (strain ATCC 700345 / ANG-SQ1), this protein is Endoribonuclease YbeY.